Reading from the N-terminus, the 106-residue chain is Phosphoribosyl-ATP pyrophosphatase (106 aa).

The protein belongs to the PRA-PH family.

The protein resides in the cytoplasm. It catalyses the reaction 1-(5-phospho-beta-D-ribosyl)-ATP + H2O = 1-(5-phospho-beta-D-ribosyl)-5'-AMP + diphosphate + H(+). It participates in amino-acid biosynthesis; L-histidine biosynthesis; L-histidine from 5-phospho-alpha-D-ribose 1-diphosphate: step 2/9. The sequence is that of Phosphoribosyl-ATP pyrophosphatase from Lactiplantibacillus plantarum (strain ATCC BAA-793 / NCIMB 8826 / WCFS1) (Lactobacillus plantarum).